The following is a 171-amino-acid chain: MEPKNSYTKEDLILCGEGKMFGEGNCRLPSDNMLMMDRITSITADGGIHGKGEIVAELDIDPSLWFFDCHFKGDPVMPGCLGLDAMWQLVGFYLGWSGGPGLGRALGVGEVKFTGQILPTAKKVTYRLVMKRVIKRKLFMGVADGTVEVDGRVIYEAKDLKVGLFQDTSAF.

His70 is an active-site residue.

This sequence belongs to the thioester dehydratase family. FabA subfamily. As to quaternary structure, homodimer.

Its subcellular location is the cytoplasm. It carries out the reaction a (3R)-hydroxyacyl-[ACP] = a (2E)-enoyl-[ACP] + H2O. It catalyses the reaction (3R)-hydroxydecanoyl-[ACP] = (2E)-decenoyl-[ACP] + H2O. The enzyme catalyses (2E)-decenoyl-[ACP] = (3Z)-decenoyl-[ACP]. Its pathway is lipid metabolism; fatty acid biosynthesis. Its function is as follows. Necessary for the introduction of cis unsaturation into fatty acids. Catalyzes the dehydration of (3R)-3-hydroxydecanoyl-ACP to E-(2)-decenoyl-ACP and then its isomerization to Z-(3)-decenoyl-ACP. Can catalyze the dehydratase reaction for beta-hydroxyacyl-ACPs with saturated chain lengths up to 16:0, being most active on intermediate chain length. The chain is 3-hydroxydecanoyl-[acyl-carrier-protein] dehydratase from Pseudoalteromonas translucida (strain TAC 125).